We begin with the raw amino-acid sequence, 552 residues long: Cation/acetate symporter ActP (552 aa).

A run of 14 helical transmembrane segments spans residues 5-25 (FMML…DALT), 35-55 (IQAI…TYWA), 78-98 (GLAI…SALV), 105-125 (GLIY…LIAE), 151-171 (LSAC…MVGA), 185-205 (VAVI…GMLA), 208-228 (WVQI…AVMV), 264-284 (ISAL…PHIL), 305-325 (GFMG…ILLV), 357-377 (FFLG…VAGL), 407-427 (VSKI…ILFE), 431-451 (IAFM…PIII), 466-486 (IGGW…PTIW), and 499-519 (YDYP…FFSI).

This sequence belongs to the sodium:solute symporter (SSF) (TC 2.A.21) family.

The protein resides in the cell inner membrane. Its function is as follows. Transports acetate. This chain is Cation/acetate symporter ActP, found in Pectobacterium carotovorum subsp. carotovorum (strain PC1).